The chain runs to 83 residues: MPEPIDAMSFEDALSELERIVRGLEGGQMKLEDAISAYERGAALRRHCDAKLGEAEMRVRAIVQNDDGTTGTEPLADTGESGR.

A disordered region spans residues Val-63–Arg-83.

Belongs to the XseB family. Heterooligomer composed of large and small subunits.

The protein resides in the cytoplasm. The enzyme catalyses Exonucleolytic cleavage in either 5'- to 3'- or 3'- to 5'-direction to yield nucleoside 5'-phosphates.. Its function is as follows. Bidirectionally degrades single-stranded DNA into large acid-insoluble oligonucleotides, which are then degraded further into small acid-soluble oligonucleotides. The sequence is that of Exodeoxyribonuclease 7 small subunit from Gluconobacter oxydans (strain 621H) (Gluconobacter suboxydans).